A 204-amino-acid chain; its full sequence is Nascent polypeptide-associated complex subunit alpha (204 aa).

Residues 1-19 show a composition bias toward basic and acidic residues; the sequence is MADPRVEELPDEEVPKTNV. Disordered stretches follow at residues 1–48 and 119–167; these read MADP…HSRN and LAAA…GLEA. Acidic residues predominate over residues 22–32; that stretch reads AGSDSESEAGE. Positions 46–111 constitute an NAC-A/B domain; that stretch reads SRNEKKARKA…AKIEDLNSQA (66 aa). Low complexity predominate over residues 119 to 128; that stretch reads LAAAEAAAGE. Positions 129–151 are enriched in basic and acidic residues; sequence HAGHDHDHDHGKGKAPETEAKKE. Over residues 152 to 164 the composition is skewed to acidic residues; it reads EEEDDGEEVDETG. The 40-residue stretch at 165 to 204 folds into the UBA domain; it reads LEAKDIELVMAQANVSRKKAVKALRENDNDIVNSIMALSI.

This sequence belongs to the NAC-alpha family. Part of the nascent polypeptide-associated complex (NAC), consisting of egd2 and egd1. NAC associates with ribosomes via egd1.

The protein resides in the cytoplasm. It is found in the nucleus. Component of the nascent polypeptide-associated complex (NAC), a dynamic component of the ribosomal exit tunnel, protecting the emerging polypeptides from interaction with other cytoplasmic proteins to ensure appropriate nascent protein targeting. The NAC complex also promotes mitochondrial protein import by enhancing productive ribosome interactions with the outer mitochondrial membrane and blocks the inappropriate interaction of ribosomes translating non-secretory nascent polypeptides with translocation sites in the membrane of the endoplasmic reticulum. Egd2 may also be involved in transcription regulation. This Aspergillus clavatus (strain ATCC 1007 / CBS 513.65 / DSM 816 / NCTC 3887 / NRRL 1 / QM 1276 / 107) protein is Nascent polypeptide-associated complex subunit alpha (egd2).